The primary structure comprises 157 residues: Small ribosomal subunit protein uS7 (157 aa).

Belongs to the universal ribosomal protein uS7 family. In terms of assembly, part of the 30S ribosomal subunit. Contacts proteins S9 and S11.

One of the primary rRNA binding proteins, it binds directly to 16S rRNA where it nucleates assembly of the head domain of the 30S subunit. Is located at the subunit interface close to the decoding center, probably blocks exit of the E-site tRNA. The protein is Small ribosomal subunit protein uS7 of Chloroflexus aurantiacus (strain ATCC 29366 / DSM 635 / J-10-fl).